We begin with the raw amino-acid sequence, 354 residues long: Phospho-N-acetylmuramoyl-pentapeptide-transferase (354 aa).

A run of 10 helical transmembrane segments spans residues 23 to 43, 66 to 86, 88 to 108, 130 to 150, 161 to 181, 193 to 213, 230 to 250, 257 to 277, 282 to 302, and 331 to 351; these read FSFF…IAWA, TPTM…LLCA, LDNV…ALGF, LAVQ…HGEL, FALL…IVAA, GLAS…AYIC, VGET…FLWF, VFMG…MGVM, ILLI…ILQV, and KIIV…LTAL.

This sequence belongs to the glycosyltransferase 4 family. MraY subfamily. Mg(2+) serves as cofactor.

The protein localises to the cell inner membrane. The enzyme catalyses UDP-N-acetyl-alpha-D-muramoyl-L-alanyl-gamma-D-glutamyl-meso-2,6-diaminopimeloyl-D-alanyl-D-alanine + di-trans,octa-cis-undecaprenyl phosphate = di-trans,octa-cis-undecaprenyl diphospho-N-acetyl-alpha-D-muramoyl-L-alanyl-D-glutamyl-meso-2,6-diaminopimeloyl-D-alanyl-D-alanine + UMP. It participates in cell wall biogenesis; peptidoglycan biosynthesis. Its function is as follows. Catalyzes the initial step of the lipid cycle reactions in the biosynthesis of the cell wall peptidoglycan: transfers peptidoglycan precursor phospho-MurNAc-pentapeptide from UDP-MurNAc-pentapeptide onto the lipid carrier undecaprenyl phosphate, yielding undecaprenyl-pyrophosphoryl-MurNAc-pentapeptide, known as lipid I. This is Phospho-N-acetylmuramoyl-pentapeptide-transferase from Campylobacter curvus (strain 525.92).